The chain runs to 578 residues: E3 ubiquitin protein ligase RIN2 (578 aa).

Helical transmembrane passes span 6–26, 58–78, 111–131, 161–181, 186–206, and 272–292; these read LPVSVASTALSFVGLQVWTEL, FTIALLTNFVLNVYILLVLSL, LVIPPTIFQGVLWTVWLTVLC, VYSVLFLVLSVDMFWIKLSLM, IGSAVYLLLLFEPCSIAFETL, and YLHIWWLHGIAFHLVDAVLFL. The segment at 337–379 adopts an RING-type; atypical zinc-finger fold; sequence CAICREPMAKAKRLHCNHLFHLGCLRSWLDQGLNEVYSCPTCR. Over residues 504 to 513 the composition is skewed to polar residues; the sequence is QASTSSTTVP. The tract at residues 504–524 is disordered; sequence QASTSSTTVPPGNGGRTGGLH. Positions 538–578 constitute a CUE domain; that stretch reads NILAMAETVREVMPHVPDEIIFQDLQRTNSVAVTVNNLLQM.

Interacts (via C-terminus) with RPM1 (via N-terminus).

It is found in the membrane. The catalysed reaction is S-ubiquitinyl-[E2 ubiquitin-conjugating enzyme]-L-cysteine + [acceptor protein]-L-lysine = [E2 ubiquitin-conjugating enzyme]-L-cysteine + N(6)-ubiquitinyl-[acceptor protein]-L-lysine.. It functions in the pathway protein modification; protein ubiquitination. Functionally, E3 ubiquitin protein ligase that acts as a positive regulator of RPM1- and RPS2-dependent hypersensitive response (HR), in association with RIN3. Probably not required for RPM1 degradation during HR. This is E3 ubiquitin protein ligase RIN2 (RIN2) from Arabidopsis thaliana (Mouse-ear cress).